The primary structure comprises 1368 residues: DNA-directed RNA polymerase subunit beta (1368 aa).

Belongs to the RNA polymerase beta chain family. In terms of assembly, the RNAP catalytic core consists of 2 alpha, 1 beta, 1 beta' and 1 omega subunit. When a sigma factor is associated with the core the holoenzyme is formed, which can initiate transcription.

It carries out the reaction RNA(n) + a ribonucleoside 5'-triphosphate = RNA(n+1) + diphosphate. Functionally, DNA-dependent RNA polymerase catalyzes the transcription of DNA into RNA using the four ribonucleoside triphosphates as substrates. The chain is DNA-directed RNA polymerase subunit beta from Paraburkholderia phymatum (strain DSM 17167 / CIP 108236 / LMG 21445 / STM815) (Burkholderia phymatum).